The sequence spans 247 residues: tRNA (guanine-N(7)-)-methyltransferase (247 aa).

S-adenosyl-L-methionine-binding positions include Gly-70, 93-94, 128-129, and Leu-148; these read EI and NA. Asp-151 is an active-site residue. 226–228 contributes to the S-adenosyl-L-methionine binding site; sequence SEE.

It belongs to the class I-like SAM-binding methyltransferase superfamily. TrmB family.

Its subcellular location is the nucleus. The catalysed reaction is guanosine(46) in tRNA + S-adenosyl-L-methionine = N(7)-methylguanosine(46) in tRNA + S-adenosyl-L-homocysteine. The protein operates within tRNA modification; N(7)-methylguanine-tRNA biosynthesis. In terms of biological role, catalyzes the formation of N(7)-methylguanine at position 46 (m7G46) in tRNA. The sequence is that of tRNA (guanine-N(7)-)-methyltransferase from Drosophila pseudoobscura pseudoobscura (Fruit fly).